Reading from the N-terminus, the 624-residue chain is Probable potassium transport system protein Kup 1 (624 aa).

Helical transmembrane passes span Leu10–Leu30, Leu48–Phe68, Pro94–Thr114, Leu133–Ala153, Ile159–Ile179, Leu210–Gly230, Phe242–Val262, Pro270–Ala290, Ile331–Phe351, Ile363–Ile383, Ile388–Ala408, and Phe413–Ser433.

This sequence belongs to the HAK/KUP transporter (TC 2.A.72) family.

It is found in the cell inner membrane. The catalysed reaction is K(+)(in) + H(+)(in) = K(+)(out) + H(+)(out). In terms of biological role, transport of potassium into the cell. Likely operates as a K(+):H(+) symporter. This is Probable potassium transport system protein Kup 1 from Legionella pneumophila (strain Lens).